The primary structure comprises 314 residues: Olfactory receptor 5P62 (314 aa).

At 1 to 28 the chain is on the extracellular side; sequence MAFIYNGSQTTVTEFILLGLTDDPVLKV. Asn-6 is a glycosylation site (N-linked (GlcNAc...) asparagine). The chain crosses the membrane as a helical span at residues 29–49; that stretch reads ILFCIILCIYLVTVFGNLSTI. The Cytoplasmic segment spans residues 50 to 57; the sequence is LLIGVSSK. A helical transmembrane segment spans residues 58–78; sequence LHHPMYFFLSHLASVDMGLSS. Over 79 to 102 the chain is Extracellular; sequence SVTPNMLVNFLTEKNTISYLGCGI. Residues Cys-100 and Cys-192 are joined by a disulfide bond. The chain crosses the membrane as a helical span at residues 103-123; that stretch reads QLSSAAFFGAVEFFLLAAMAY. The Cytoplasmic portion of the chain corresponds to 124–136; the sequence is DRLVAICNPLLYS. The chain crosses the membrane as a helical span at residues 137-157; the sequence is TKMSSQVCIQLVAGSYVGGFL. The Extracellular segment spans residues 158-199; that stretch reads NASFVTHFFFSFLFCGPNRVNHFFCDLSPMMELSCSDVSISE. Residues 200 to 220 traverse the membrane as a helical segment; the sequence is IVISFSAGSFTMTTLFVIVIP. Residues 221–240 are Cytoplasmic-facing; that stretch reads YFYIFITILKIRSTEGRQKA. The helical transmembrane segment at 241–261 threads the bilayer; the sequence is FSTCTSHLTAVTLYYGTIIFI. Over 262–274 the chain is Extracellular; it reads YVMPKSTYSRDQN. Residues 275–295 form a helical membrane-spanning segment; it reads KVVSLFYMLVIPVLNPLIYSL. Over 296–314 the chain is Cytoplasmic; it reads RNNEIKDALKRQFYRKTLL.

The protein belongs to the G-protein coupled receptor 1 family.

The protein resides in the cell membrane. Functionally, potential odorant receptor. In Mus musculus (Mouse), this protein is Olfactory receptor 5P62.